The primary structure comprises 274 residues: Triosephosphate isomerase (274 aa).

13–15 (NWK) contributes to the substrate binding site. Residue His-98 is the Electrophile of the active site. The active-site Proton acceptor is the Glu-170. Substrate contacts are provided by Gly-176 and Ser-216.

Belongs to the triosephosphate isomerase family. As to quaternary structure, homodimer.

It localises to the cytoplasm. The catalysed reaction is D-glyceraldehyde 3-phosphate = dihydroxyacetone phosphate. It participates in carbohydrate biosynthesis; gluconeogenesis. It functions in the pathway carbohydrate degradation; glycolysis; D-glyceraldehyde 3-phosphate from glycerone phosphate: step 1/1. Functionally, involved in the gluconeogenesis. Catalyzes stereospecifically the conversion of dihydroxyacetone phosphate (DHAP) to D-glyceraldehyde-3-phosphate (G3P). This chain is Triosephosphate isomerase, found in Onion yellows phytoplasma (strain OY-M).